A 137-amino-acid chain; its full sequence is Thioredoxin-like protein R548 (137 aa).

Residues 2–137 (SKDSVETNTI…LEKSIVESSQ (136 aa)) enclose the Thioredoxin domain. Active-site nucleophile residues include C61 and C64. C61 and C64 are disulfide-bonded.

The protein belongs to the thioredoxin family.

Its function is as follows. Participates in various redox reactions through the reversible oxidation of its active center dithiol to a disulfide and catalyzes dithiol-disulfide exchange reactions. The sequence is that of Thioredoxin-like protein R548 from Acanthamoeba polyphaga mimivirus (APMV).